A 53-amino-acid polypeptide reads, in one-letter code: Cytochrome c-552 (53 aa).

The heme c site is built by Cys19, Cys22, His23, and Met44.

Binds 1 heme c group covalently per subunit.

Its subcellular location is the cell membrane. The protein is Cytochrome c-552 of Schinkia azotoformans (Bacillus azotoformans).